The sequence spans 276 residues: Bis(5'-nucleosyl)-tetraphosphatase, symmetrical (276 aa).

Belongs to the Ap4A hydrolase family.

The enzyme catalyses P(1),P(4)-bis(5'-adenosyl) tetraphosphate + H2O = 2 ADP + 2 H(+). Its function is as follows. Hydrolyzes diadenosine 5',5'''-P1,P4-tetraphosphate to yield ADP. This is Bis(5'-nucleosyl)-tetraphosphatase, symmetrical from Legionella pneumophila (strain Corby).